A 925-amino-acid polypeptide reads, in one-letter code: Nonribosomal peptide synthetase apvA (925 aa).

Positions alanine 15–isoleucine 436 are adenylation (A) domain. A Carrier domain is found at glutamate 564–glutamine 644. Residue serine 601 is modified to O-(pantetheine 4'-phosphoryl)serine. A thioesterase (TE) domain region spans residues proline 663–valine 909.

Belongs to the NRP synthetase family. As to expression, apvA specifically produces aspulvinone E in hyphea, in contrast to melA which produces aspulvinone E in conidia where it is converted to UV-protective Asp-melanin.

The catalysed reaction is 2 3-(4-hydroxyphenyl)pyruvate + AH2 + 2 ATP + O2 = aspulvinone E + A + 2 AMP + CO2 + 2 diphosphate + H2O + H(+). Its pathway is secondary metabolite biosynthesis. Functionally, nonribosomal peptide synthetase; part of the gene cluster that mediates the biosynthesis of aspulvinones. The nonribosomal peptide synthetase apvA is responsible for the production of aspulvinone E, the core structure of aspulvinones. ApvA first activates 4-hydroxyphenylpyruvate (HPPA) through its A domain to AMP-HPPA. The HPPA unit is then loaded to the T domain and eventually transferred to the TE domain. Upon loading of another HPPA unit to the T domain, the TE domain promotes the enolate formation on the unit attached. The next step involves head to tail Claisen condensation, followed by the keto-enol tautermerization and a nucleophilic attack on the carbonyl carbon to yield the furanone partial structure. A spontaneous oxidation at the beta-carbon of the thioester might occur in aerobic condition. The TE domain then catalyzes the hydrolysis of the thioester, followed by spontaneous decarboxylation, dehydroxylation and keto-enol tautermerization to give the aspulvinone core. Aspulvinone E is highly unstable and converted to isoaspulvinone E in the presence of light. The structural diversity of the aspulvinones suggests that other tailoring enzymes are involved and have still to be identified. This Aspergillus terreus (strain NIH 2624 / FGSC A1156) protein is Nonribosomal peptide synthetase apvA.